Consider the following 122-residue polypeptide: Succinate dehydrogenase assembly factor 2, mitochondrial (122 aa).

It belongs to the SDHAF2 family. As to quaternary structure, interacts with the flavoprotein subunit within the SDH catalytic dimer.

The protein resides in the mitochondrion matrix. Its function is as follows. Plays an essential role in the assembly of succinate dehydrogenase (SDH), an enzyme complex (also referred to as respiratory complex II) that is a component of both the tricarboxylic acid (TCA) cycle and the mitochondrial electron transport chain, and which couples the oxidation of succinate to fumarate with the reduction of ubiquinone (coenzyme Q) to ubiquinol. Required for flavinylation (covalent attachment of FAD) of the flavoprotein subunit of the SDH catalytic dimer. The polypeptide is Succinate dehydrogenase assembly factor 2, mitochondrial (Caenorhabditis briggsae).